The chain runs to 301 residues: Inosose dehydratase (301 aa).

This sequence belongs to the IolE/MocC family. Requires glutathione as cofactor. Co(2+) is required as a cofactor. The cofactor is Mn(2+).

It catalyses the reaction scyllo-inosose = 3D-3,5/4-trihydroxycyclohexane-1,2-dione + H2O. Its function is as follows. Catalyzes the dehydration of inosose (2-keto-myo-inositol, 2KMI or 2,4,6/3,5-pentahydroxycyclohexanone) to 3D-(3,5/4)-trihydroxycyclohexane-1,2-dione (D-2,3-diketo-4-deoxy-epi-inositol). The chain is Inosose dehydratase from Salmonella typhimurium (strain LT2 / SGSC1412 / ATCC 700720).